The primary structure comprises 92 residues: Small ribosomal subunit protein uS19c (92 aa).

Belongs to the universal ribosomal protein uS19 family.

Its subcellular location is the plastid. The protein localises to the chloroplast. Protein S19 forms a complex with S13 that binds strongly to the 16S ribosomal RNA. In Liriodendron tulipifera (Tuliptree), this protein is Small ribosomal subunit protein uS19c.